The chain runs to 85 residues: ATP synthase subunit c (85 aa).

The next 2 helical transmembrane spans lie at 10 to 30 (IAVG…FAIL) and 53 to 73 (FIIA…ALLF).

This sequence belongs to the ATPase C chain family. In terms of assembly, F-type ATPases have 2 components, F(1) - the catalytic core - and F(0) - the membrane proton channel. F(1) has five subunits: alpha(3), beta(3), gamma(1), delta(1), epsilon(1). F(0) has three main subunits: a(1), b(2) and c(10-14). The alpha and beta chains form an alternating ring which encloses part of the gamma chain. F(1) is attached to F(0) by a central stalk formed by the gamma and epsilon chains, while a peripheral stalk is formed by the delta and b chains.

The protein resides in the cell inner membrane. Its function is as follows. F(1)F(0) ATP synthase produces ATP from ADP in the presence of a proton or sodium gradient. F-type ATPases consist of two structural domains, F(1) containing the extramembraneous catalytic core and F(0) containing the membrane proton channel, linked together by a central stalk and a peripheral stalk. During catalysis, ATP synthesis in the catalytic domain of F(1) is coupled via a rotary mechanism of the central stalk subunits to proton translocation. In terms of biological role, key component of the F(0) channel; it plays a direct role in translocation across the membrane. A homomeric c-ring of between 10-14 subunits forms the central stalk rotor element with the F(1) delta and epsilon subunits. The protein is ATP synthase subunit c of Aliivibrio salmonicida (strain LFI1238) (Vibrio salmonicida (strain LFI1238)).